Consider the following 157-residue polypeptide: Transcription factor HES-2 (157 aa).

The bHLH domain occupies 13–70 (LRKSLKPLLEKRRRARINESLSQLKGLVLPLLGAETSRYSKLEKADILEMTVRFLREQ). The Orange domain occupies 86 to 119 (YLEGYRACLARLARVLPACSVLEPAVSARLLEHL). Positions 124–157 (VSGGPPSLTPASASAPAPSPPVPPPSSLGLWRPW) are disordered. Residues 125–139 (SGGPPSLTPASASAP) show a composition bias toward low complexity. Over residues 140-149 (APSPPVPPPS) the composition is skewed to pro residues. The short motif at 154 to 157 (WRPW) is the WRPW motif element.

In terms of assembly, transcription repression requires formation of a complex with a corepressor protein of the Groucho/TLE family.

Its subcellular location is the nucleus. Functionally, transcriptional repressor of genes that require a bHLH protein for their transcription. This Rattus norvegicus (Rat) protein is Transcription factor HES-2 (Hes2).